Reading from the N-terminus, the 148-residue chain is UPF0260 protein ECA2365 (148 aa).

Belongs to the UPF0260 family.

This Pectobacterium atrosepticum (strain SCRI 1043 / ATCC BAA-672) (Erwinia carotovora subsp. atroseptica) protein is UPF0260 protein ECA2365.